The chain runs to 303 residues: Crk-like protein (303 aa).

The region spanning 14–102 (WYMGPVSRQE…LDTTTLIEPA (89 aa)) is the SH2 domain. The region spanning 123–183 (DNLEYVRTLY…PVPYVEKLVR (61 aa)) is the SH3 1 domain. Phosphotyrosine occurs at positions 127 and 207. The segment at 184–234 (SSPHGKHGNRNSNSYGIPEPAHAYAQPQTTTPLPAVSGSPGAAITPLPSTQ) is disordered. Residues 235–296 (NGPVFAKAIQ…PFTHVKIFDP (62 aa)) form the SH3 2 domain.

Belongs to the CRK family. Interacts with tyrosine-phosphorylated EPOR and INPP5D/SHIP1. Interacts with DOCK2 and DOCK5 via its first SH3 domain. Interacts with phosphorylated CBLB and IRS4. Interacts with BCAR1/CAS and NEDD9/HEF1.

May mediate the transduction of intracellular signals. The chain is Crk-like protein (CRKL) from Homo sapiens (Human).